The sequence spans 519 residues: MGLVIFLALIVLILIIGLRIFKAFMILVWHPFVLTRRLKNQGISGPNYRIFYGNLSEIKKMKRESHLSILDPSSNDIFPRILPHYQKWMSQYGETFLYWNGTEPRICISDPELAKTMLSNKLGFFVKSKARPEAVKLVGSKGLVFIEGADWVRHRRILNPAFSIDRLKIMTTVMVDCTLKMLEEWRKESTKEETEHPKIKKEMNEEFQRLTADIIATSAFGSSYVEGIEVFRSQMELKRCYTTSLNQVSIPGTQYLPTPSNIRVWKLERKMDNSIKRIISSRLQSKSDYGDDLLGILLKAYNTEGKERKMSIEEIIHECRTFFFGGHETTSNLLAWTTMLLSLHQDWQEKLREEIFKECGKEKTPDSETFSKLKLMNMVIMESLRLYGPVSALAREASVNIKLGDLEIPKGTTVVIPLLKMHSDKTLWGSDADKFNPMRFANGVSRAANHPNALLAFSVGPRACIGQNFVMIEAKTVLTMILQRFRFISLCDEYKHTPVDNVTIQPQYGLPVMLQPLED.

A helical membrane pass occupies residues 1–21 (MGLVIFLALIVLILIIGLRIF). Heme is bound at residue cysteine 464.

Belongs to the cytochrome P450 family. Heme is required as a cofactor. In terms of tissue distribution, highly expressed in siliques.

Its subcellular location is the membrane. In terms of biological role, involved in stress response. Does not function as cytokinin hydroxylase in yeast heterologous system. This is Cytochrome P450 709B1 from Arabidopsis thaliana (Mouse-ear cress).